We begin with the raw amino-acid sequence, 718 residues long: Fatty acid oxidation complex subunit alpha (718 aa).

The enoyl-CoA hydratase/isomerase stretch occupies residues 1–188; the sequence is MIYQGESIRV…KVGAVDAVVE (188 aa). D295 serves as a coordination point for substrate. A 3-hydroxyacyl-CoA dehydrogenase region spans residues 310-718; it reads TKEIKTAGVL…KSYFDTTSAK (409 aa). NAD(+) contacts are provided by residues M324, D343, 400-402, K407, and S429; that span reads VVE. H450 serves as the catalytic For 3-hydroxyacyl-CoA dehydrogenase activity. An NAD(+)-binding site is contributed by N453. 2 residues coordinate substrate: N500 and Y658.

In the N-terminal section; belongs to the enoyl-CoA hydratase/isomerase family. The protein in the C-terminal section; belongs to the 3-hydroxyacyl-CoA dehydrogenase family. As to quaternary structure, heterotetramer of two alpha chains (FadB) and two beta chains (FadA).

The enzyme catalyses a (3S)-3-hydroxyacyl-CoA + NAD(+) = a 3-oxoacyl-CoA + NADH + H(+). It carries out the reaction a (3S)-3-hydroxyacyl-CoA = a (2E)-enoyl-CoA + H2O. It catalyses the reaction a 4-saturated-(3S)-3-hydroxyacyl-CoA = a (3E)-enoyl-CoA + H2O. The catalysed reaction is (3S)-3-hydroxybutanoyl-CoA = (3R)-3-hydroxybutanoyl-CoA. The enzyme catalyses a (3Z)-enoyl-CoA = a 4-saturated (2E)-enoyl-CoA. It carries out the reaction a (3E)-enoyl-CoA = a 4-saturated (2E)-enoyl-CoA. The protein operates within lipid metabolism; fatty acid beta-oxidation. In terms of biological role, involved in the aerobic and anaerobic degradation of long-chain fatty acids via beta-oxidation cycle. Catalyzes the formation of 3-oxoacyl-CoA from enoyl-CoA via L-3-hydroxyacyl-CoA. It can also use D-3-hydroxyacyl-CoA and cis-3-enoyl-CoA as substrate. This is Fatty acid oxidation complex subunit alpha from Idiomarina loihiensis (strain ATCC BAA-735 / DSM 15497 / L2-TR).